The sequence spans 154 residues: Urease accessory protein UreE (154 aa).

The disordered stretch occupies residues 135 to 154 (PENGAYHGTGGHHHHHHDHE). Residues 144–154 (GGHHHHHHDHE) are compositionally biased toward basic residues.

This sequence belongs to the UreE family.

The protein resides in the cytoplasm. Its function is as follows. Involved in urease metallocenter assembly. Binds nickel. Probably functions as a nickel donor during metallocenter assembly. This is Urease accessory protein UreE from Teredinibacter turnerae (strain ATCC 39867 / T7901).